Reading from the N-terminus, the 314-residue chain is Polyamine aminopropyltransferase (314 aa).

The PABS domain occupies 13–249; sequence WSWFLEWLTP…SMWGFVVASD (237 aa). Glutamine 42 provides a ligand contact to S-methyl-5'-thioadenosine. Residues histidine 73 and glutamate 97 each contribute to the spermidine site. S-methyl-5'-thioadenosine-binding positions include aspartate 117 and 149–150; that span reads DA. Aspartate 168 (proton acceptor) is an active-site residue. Residue proline 177 participates in S-methyl-5'-thioadenosine binding.

This sequence belongs to the spermidine/spermine synthase family. Homodimer or homotetramer.

Its subcellular location is the cytoplasm. It catalyses the reaction S-adenosyl 3-(methylsulfanyl)propylamine + putrescine = S-methyl-5'-thioadenosine + spermidine + H(+). The protein operates within amine and polyamine biosynthesis; spermidine biosynthesis; spermidine from putrescine: step 1/1. In terms of biological role, catalyzes the irreversible transfer of a propylamine group from the amino donor S-adenosylmethioninamine (decarboxy-AdoMet) to putrescine (1,4-diaminobutane) to yield spermidine. The protein is Polyamine aminopropyltransferase of Aeropyrum pernix (strain ATCC 700893 / DSM 11879 / JCM 9820 / NBRC 100138 / K1).